Reading from the N-terminus, the 218-residue chain is rRNA methyltransferase 2, mitochondrial (218 aa).

Residues 59–62, Asp-80, 96–97, and Asp-133 each bind S-adenosyl-L-methionine; these read PGSW and DI. The active-site Proton acceptor is Lys-173.

This sequence belongs to the class I-like SAM-binding methyltransferase superfamily. RNA methyltransferase RlmE family.

It is found in the mitochondrion. It catalyses the reaction a uridine in 21S rRNA + S-adenosyl-L-methionine = a 2'-O-methyluridine in 21S rRNA + S-adenosyl-L-homocysteine + H(+). Its function is as follows. S-adenosyl-L-methionine-dependent 2'-O-ribose methyltransferase that catalyzes the formation of the 2'-O-methyluridine corresponding to position 2791 in S.cerevisiae 21S mitochondrial large subunit ribosomal RNA (mtLSU rRNA), a universally conserved modification in the peptidyl transferase domain of the mtLSU rRNA. This Schizosaccharomyces pombe (strain 972 / ATCC 24843) (Fission yeast) protein is rRNA methyltransferase 2, mitochondrial.